Reading from the N-terminus, the 335-residue chain is Holliday junction branch migration complex subunit RuvB (335 aa).

A large ATPase domain (RuvB-L) region spans residues 2-184 (ADERIVSAEN…FGIVEHMAYY (183 aa)). Residues leucine 23, arginine 24, glycine 65, lysine 68, threonine 69, threonine 70, 131 to 133 (EDF), arginine 174, tyrosine 184, and arginine 221 each bind ATP. Mg(2+) is bound at residue threonine 69. The small ATPAse domain (RuvB-S) stretch occupies residues 185–255 (TEADLMDIVQ…IADHALSQLQ (71 aa)). The head domain (RuvB-H) stretch occupies residues 258-335 (IRGLDGVDRK…AHLGMPYPEK (78 aa)). 2 residues coordinate DNA: arginine 313 and arginine 318.

This sequence belongs to the RuvB family. In terms of assembly, homohexamer. Forms an RuvA(8)-RuvB(12)-Holliday junction (HJ) complex. HJ DNA is sandwiched between 2 RuvA tetramers; dsDNA enters through RuvA and exits via RuvB. An RuvB hexamer assembles on each DNA strand where it exits the tetramer. Each RuvB hexamer is contacted by two RuvA subunits (via domain III) on 2 adjacent RuvB subunits; this complex drives branch migration. In the full resolvosome a probable DNA-RuvA(4)-RuvB(12)-RuvC(2) complex forms which resolves the HJ.

The protein resides in the cytoplasm. The catalysed reaction is ATP + H2O = ADP + phosphate + H(+). In terms of biological role, the RuvA-RuvB-RuvC complex processes Holliday junction (HJ) DNA during genetic recombination and DNA repair, while the RuvA-RuvB complex plays an important role in the rescue of blocked DNA replication forks via replication fork reversal (RFR). RuvA specifically binds to HJ cruciform DNA, conferring on it an open structure. The RuvB hexamer acts as an ATP-dependent pump, pulling dsDNA into and through the RuvAB complex. RuvB forms 2 homohexamers on either side of HJ DNA bound by 1 or 2 RuvA tetramers; 4 subunits per hexamer contact DNA at a time. Coordinated motions by a converter formed by DNA-disengaged RuvB subunits stimulates ATP hydrolysis and nucleotide exchange. Immobilization of the converter enables RuvB to convert the ATP-contained energy into a lever motion, pulling 2 nucleotides of DNA out of the RuvA tetramer per ATP hydrolyzed, thus driving DNA branch migration. The RuvB motors rotate together with the DNA substrate, which together with the progressing nucleotide cycle form the mechanistic basis for DNA recombination by continuous HJ branch migration. Branch migration allows RuvC to scan DNA until it finds its consensus sequence, where it cleaves and resolves cruciform DNA. The protein is Holliday junction branch migration complex subunit RuvB of Latilactobacillus sakei subsp. sakei (strain 23K) (Lactobacillus sakei subsp. sakei).